The following is a 219-amino-acid chain: Ribosome maturation factor RimP (219 aa).

The segment at 195-219 (EGRIPGDDLGAEPEDAASTETQEKK) is disordered.

It belongs to the RimP family.

It is found in the cytoplasm. Required for maturation of 30S ribosomal subunits. The polypeptide is Ribosome maturation factor RimP (Brucella melitensis biotype 2 (strain ATCC 23457)).